We begin with the raw amino-acid sequence, 510 residues long: E3 ubiquitin-protein ligase TRIM7 (510 aa).

An RING-type zinc finger spans residues 29–81 (CSICLEFFREPVSVECGHSFCRACIMRCWERPGAGTGTATRTLPCPLPCPQCR). Serine 106 is modified (phosphoserine; by RPS6KA5). The segment at 124 to 165 (AAAARCSQHGEQLKLYCQDDGRAICVVCDRAREHRSHAVLPL) adopts a B box-type zinc-finger fold. Zn(2+)-binding residues include cysteine 129, histidine 132, cysteine 151, and histidine 157. The stretch at 165-275 (LEEAVQEAKE…SGQIQETAQK (111 aa)) forms a coiled coil. The B30.2/SPRY domain occupies 323–510 (LLKKFKEDLQ…STGTYLRIWP (188 aa)).

It belongs to the TRIM/RBCC family. Forms homodimers. Interacts with GNIP2. Interacts with GYG1. Interacts with RNF187 (via C-terminus). In terms of processing, phosphorylated at Ser-106 by RPS6KA5/MSK1, which stimulates the ubiquitin ligase activity. Post-translationally, auto-ubiquitinates via 'Lys-63'-linked polyubiquitination. Highly expressed in antigen-presenting cells.

The protein localises to the nucleus. It is found in the cytoplasm. It localises to the golgi apparatus. It carries out the reaction S-ubiquitinyl-[E2 ubiquitin-conjugating enzyme]-L-cysteine + [acceptor protein]-L-lysine = [E2 ubiquitin-conjugating enzyme]-L-cysteine + N(6)-ubiquitinyl-[acceptor protein]-L-lysine.. The protein operates within protein modification; protein ubiquitination. Its function is as follows. E3 ubiquitin-protein ligase that have both tumor-promoting and tumor-suppressing activities and functions in several biological processes including innate immunity, regulation of ferroptosis as well as cell proliferation and migration. Acts as an antiviral effector against multiple viruses by targeting specific viral proteins for ubiquitination and degradation including norovirus NTPase protein. Mechanistically, recognizes the C-terminal glutamine-containing motif generated by viral proteases that process the polyproteins and trigger their ubiquitination and subsequent degradation. Mediates 'Lys-63'-linked polyubiquitination and stabilization of the JUN coactivator RNF187 in response to growth factor signaling via the MEK/ERK pathway, thereby regulating JUN transactivation and cellular proliferation. Promotes the TLR4-mediated signaling activation through its E3 ligase domain leading to production of pro-inflammatory cytokines and type I interferon. Also plays a negative role in the regulation of exogenous cytosolic DNA virus-triggered immune response. Mechanistically, enhances the 'Lys-48'-linked ubiquitination of STING1 leading to its proteasome-dependent degradation. Mediates the ubiquitination of the SIN3-HDAC chromatin remodeling complex component BRMS1. Modulates NCOA4-mediated ferritinophagy and ferroptosis in glioblastoma cells by ubiquitinating NCOA4, leading to its degradation. The sequence is that of E3 ubiquitin-protein ligase TRIM7 (Trim7) from Mus musculus (Mouse).